A 95-amino-acid chain; its full sequence is Selenoprotein K (95 aa).

A helical transmembrane segment spans residues 20–42; the sequence is LSFLTDMFWGITDFIVMFFQSII. The tract at residues 48–95 is disordered; that stretch reads RRGCQNSSSRTRFDDGRGPPGNPRRRMGRIDHNSGPNAPPMSGGGUGR. Residue Sec93 is a non-standard amino acid, selenocysteine.

This sequence belongs to the selenoprotein K family.

The protein localises to the endoplasmic reticulum membrane. It localises to the cell membrane. In terms of biological role, required for Ca(2+) flux in immune cells and plays a role in T-cell proliferation and in T-cell and neutrophil migration. Involved in endoplasmic reticulum-associated degradation (ERAD) of soluble glycosylated proteins. Required for cell surface expression of CD36 and involved in macrophage uptake of low-density lipoprotein and in foam cell formation. Required for palmitoylation. The chain is Selenoprotein K (selenok) from Xenopus tropicalis (Western clawed frog).